Reading from the N-terminus, the 198-residue chain is Nucleoid occlusion factor SlmA (198 aa).

Residues 10–70 (NRREEILQSL…SLIEFIEDSL (61 aa)) form the HTH tetR-type domain. The segment at residues 33–52 (TTAKLAASVGVSEAALYRHF) is a DNA-binding region (H-T-H motif). A coiled-coil region spans residues 117–144 (EQDRLQGRINQLFERIEAQLRQVLREKR).

Belongs to the nucleoid occlusion factor SlmA family. As to quaternary structure, homodimer. Interacts with FtsZ.

The protein resides in the cytoplasm. It localises to the nucleoid. In terms of biological role, required for nucleoid occlusion (NO) phenomenon, which prevents Z-ring formation and cell division over the nucleoid. Acts as a DNA-associated cell division inhibitor that binds simultaneously chromosomal DNA and FtsZ, and disrupts the assembly of FtsZ polymers. SlmA-DNA-binding sequences (SBS) are dispersed on non-Ter regions of the chromosome, preventing FtsZ polymerization at these regions. The sequence is that of Nucleoid occlusion factor SlmA from Salmonella dublin (strain CT_02021853).